A 565-amino-acid chain; its full sequence is MDDSSINKELKQKLNFSYCEEESESEGQEAWETRDAHSQIPDRAEGQESEAKFTPPGPPLSSVHEVGTFQEKTKKSPEQVLMTPVSGFRNYPETPAQPDSRSKLLDCESPFTPKGLLSQSVISSTEKIPSRGSKHLRFTPVPFVDEMTSSALVNINPFTPESYRKQFLKSNGKRKTRGDFEEAGPGEGNVEQGLPAKRCVLQETNMASRYEKEFLEVEKIGVGEFGTVYKCIKRLDGCVYAIKRSTKPFAGLSNENLALHEVYAHAVLGHHPHVVRYYSAWAEDDHMIIQNEYCNGGSLQTAISENTKSGNHFQEPKLKDILLQISLGLKYIHSSGMVHLDIKPSNIFICHKMQSDSPVVPEEIENEADWFLSANVMYKIGDLGHVTSISKPKVEEGDSRFLANEILQEDYQHLPKADIFALGLTIAVAAGAESLPTNGAAWHHIREGKLPDIPQKLSEEFYNLLKNMIHPDPRERPSAAALARSRVLRPSLGKAEELQQQLNLEKFKTATLERELREAQQAWFSQEERGDAGVSGTPTGSRSTKRLVGGKSAKSSSFTWGKSSP.

Disordered stretches follow at residues 18-78 (YCEE…KSPE) and 169-191 (KSNG…GNVE). The span at 19–29 (CEEESESEGQE) shows a compositional bias: acidic residues. Residues 31–51 (WETRDAHSQIPDRAEGQESEA) are compositionally biased toward basic and acidic residues. Position 76 is a phosphoserine (serine 76). The short motif at 173–175 (KRK) is the Nuclear localization signal element. Residues 214–492 (FLEVEKIGVG…ARSRVLRPSL (279 aa)) form the Protein kinase domain. ATP contacts are provided by residues 220-228 (IGVGEFGTV) and lysine 243. The Nuclear export signal signature appears at 317 to 331 (KLKDILLQISLGLKY). Residue aspartate 341 is the Proton acceptor of the active site. Residues asparagine 346 and aspartate 382 each coordinate Mg(2+). Residues 495–521 (AEELQQQLNLEKFKTATLERELREAQQ) adopt a coiled-coil conformation. The disordered stretch occupies residues 521–565 (QAWFSQEERGDAGVSGTPTGSRSTKRLVGGKSAKSSSFTWGKSSP). The span at 553–565 (AKSSSFTWGKSSP) shows a compositional bias: polar residues.

This sequence belongs to the protein kinase superfamily. Ser/Thr protein kinase family. WEE1 subfamily. In terms of processing, phosphorylation leads to increase its activity.

Its subcellular location is the nucleus. The enzyme catalyses L-tyrosyl-[protein] + ATP = O-phospho-L-tyrosyl-[protein] + ADP + H(+). Functionally, oocyte-specific protein tyrosine kinase that phosphorylates and inhibits CDK1 and acts as a key regulator of meiosis during both prophase I and metaphase II. Required to maintain meiotic arrest in oocytes during the germinal vesicle (GV) stage, a long period of quiescence at dictyate prophase I, by phosphorylating CDK1 at 'Tyr-15', leading to inhibit CDK1 activity and prevent meiotic reentry. Also required for metaphase II exit during egg activation by phosphorylating CDK1 at 'Tyr-15', to ensure exit from meiosis in oocytes and promote pronuclear formation. The protein is Wee1-like protein kinase 2 (WEE2) of Ailuropoda melanoleuca (Giant panda).